Consider the following 206-residue polypeptide: Holliday junction branch migration complex subunit RuvA (206 aa).

Positions 1–67 (MIASIFGKIT…QILEEGFAFN (67 aa)) are domain I. The segment at 68–141 (TLEEKEWFSK…YDRDDGGKRI (74 aa)) is domain II. Residues 141-145 (IKPNT) form a flexible linker region. The interval 146 to 206 (AMANDYDEMF…QNNEVTNKTA (61 aa)) is domain III.

The protein belongs to the RuvA family. Homotetramer. Forms an RuvA(8)-RuvB(12)-Holliday junction (HJ) complex. HJ DNA is sandwiched between 2 RuvA tetramers; dsDNA enters through RuvA and exits via RuvB. An RuvB hexamer assembles on each DNA strand where it exits the tetramer. Each RuvB hexamer is contacted by two RuvA subunits (via domain III) on 2 adjacent RuvB subunits; this complex drives branch migration. In the full resolvosome a probable DNA-RuvA(4)-RuvB(12)-RuvC(2) complex forms which resolves the HJ.

The protein localises to the cytoplasm. The RuvA-RuvB-RuvC complex processes Holliday junction (HJ) DNA during genetic recombination and DNA repair, while the RuvA-RuvB complex plays an important role in the rescue of blocked DNA replication forks via replication fork reversal (RFR). RuvA specifically binds to HJ cruciform DNA, conferring on it an open structure. The RuvB hexamer acts as an ATP-dependent pump, pulling dsDNA into and through the RuvAB complex. HJ branch migration allows RuvC to scan DNA until it finds its consensus sequence, where it cleaves and resolves the cruciform DNA. This is Holliday junction branch migration complex subunit RuvA from Mycoplasma pneumoniae (strain ATCC 29342 / M129 / Subtype 1) (Mycoplasmoides pneumoniae).